Reading from the N-terminus, the 58-residue chain is Enterocin-HF (58 aa).

Positions 1 to 15 are excised as a propeptide; it reads MEKLTVKEMSQVVGG. A disulfide bridge links cysteine 24 with cysteine 29.

The protein localises to the secreted. Its function is as follows. Bacteriocin. The chain is Enterocin-HF (entHF) from Enterococcus faecium (Streptococcus faecium).